Reading from the N-terminus, the 136-residue chain is Protein scalloped (136 aa).

The protein resides in the nucleus. Probable transcription factor that function in the regulation of cell-specific gene expression during drosophila development, particularly in the differentiation of the nervous system. The chain is Protein scalloped (SD) from Junonia coenia (Peacock butterfly).